The chain runs to 372 residues: Alanine dehydrogenase 2 (372 aa).

Residue His95 is part of the active site. Residue 169–199 (KVTIIGGGQAGTNAAKIALGLGADVTILDVN) participates in NAD(+) binding.

Belongs to the AlaDH/PNT family.

The catalysed reaction is L-alanine + NAD(+) + H2O = pyruvate + NH4(+) + NADH + H(+). The protein operates within amino-acid degradation; L-alanine degradation via dehydrogenase pathway; NH(3) and pyruvate from L-alanine: step 1/1. May play a role in cell wall synthesis as L-alanine is an important constituent of the peptidoglycan layer. The polypeptide is Alanine dehydrogenase 2 (ald2) (Staphylococcus aureus (strain N315)).